Consider the following 416-residue polypeptide: Glutamyl-tRNA reductase (416 aa).

Residues 49–52, Ser-105, 110–112, and Gln-116 each bind substrate; these read TCNR and EPQ. Cys-50 serves as the catalytic Nucleophile. 185–190 is a binding site for NADP(+); that stretch reads GAGETI.

The protein belongs to the glutamyl-tRNA reductase family. Homodimer.

It carries out the reaction (S)-4-amino-5-oxopentanoate + tRNA(Glu) + NADP(+) = L-glutamyl-tRNA(Glu) + NADPH + H(+). It participates in porphyrin-containing compound metabolism; protoporphyrin-IX biosynthesis; 5-aminolevulinate from L-glutamyl-tRNA(Glu): step 1/2. In terms of biological role, catalyzes the NADPH-dependent reduction of glutamyl-tRNA(Glu) to glutamate 1-semialdehyde (GSA). The protein is Glutamyl-tRNA reductase of Shewanella oneidensis (strain ATCC 700550 / JCM 31522 / CIP 106686 / LMG 19005 / NCIMB 14063 / MR-1).